We begin with the raw amino-acid sequence, 77 residues long: Defensin-like protein 1 (77 aa).

Residues 1-30 (MKLSVRFISAALLLFMVFIATGMGPVTVEA) form the signal peptide. Disulfide bonds link Cys-33–Cys-77, Cys-44–Cys-64, Cys-50–Cys-71, and Cys-54–Cys-73.

This sequence belongs to the DEFL family. In terms of tissue distribution, expressed in the whole plant except roots.

Its subcellular location is the secreted. In terms of biological role, confers broad-spectrum resistance to pathogens. This Arabidopsis thaliana (Mouse-ear cress) protein is Defensin-like protein 1 (PDF2.3).